Consider the following 188-residue polypeptide: Peptidyl-tRNA hydrolase (188 aa).

Residue tyrosine 15 participates in tRNA binding. The Proton acceptor role is filled by histidine 20. Residues phenylalanine 66, asparagine 68, and asparagine 114 each coordinate tRNA.

It belongs to the PTH family. Monomer.

The protein resides in the cytoplasm. The enzyme catalyses an N-acyl-L-alpha-aminoacyl-tRNA + H2O = an N-acyl-L-amino acid + a tRNA + H(+). In terms of biological role, hydrolyzes ribosome-free peptidyl-tRNAs (with 1 or more amino acids incorporated), which drop off the ribosome during protein synthesis, or as a result of ribosome stalling. Catalyzes the release of premature peptidyl moieties from peptidyl-tRNA molecules trapped in stalled 50S ribosomal subunits, and thus maintains levels of free tRNAs and 50S ribosomes. The protein is Peptidyl-tRNA hydrolase of Lactococcus lactis subsp. cremoris (strain MG1363).